The chain runs to 201 residues: Acyl-homoserine-lactone synthase (201 aa).

Belongs to the autoinducer synthase family.

The catalysed reaction is a fatty acyl-[ACP] + S-adenosyl-L-methionine = an N-acyl-L-homoserine lactone + S-methyl-5'-thioadenosine + holo-[ACP] + H(+). Functionally, required for the synthesis of BHL (N-butanoyl-L-homoserine lactone), and HHL (N-hexanoyl-L-homoserine lactone) autoinducer molecules which bind to RhlR and thus acts in elastase biosynthesis regulation. In Pseudomonas aeruginosa (strain ATCC 15692 / DSM 22644 / CIP 104116 / JCM 14847 / LMG 12228 / 1C / PRS 101 / PAO1), this protein is Acyl-homoserine-lactone synthase (rhlI).